Here is a 91-residue protein sequence, read N- to C-terminus: UPF0250 protein PputW619_0619 (91 aa).

This sequence belongs to the UPF0250 family.

This Pseudomonas putida (strain W619) protein is UPF0250 protein PputW619_0619.